The following is a 225-amino-acid chain: Protein-L-isoaspartate O-methyltransferase (225 aa).

Ser75 is a catalytic residue.

The protein belongs to the methyltransferase superfamily. L-isoaspartyl/D-aspartyl protein methyltransferase family.

It is found in the cytoplasm. The catalysed reaction is [protein]-L-isoaspartate + S-adenosyl-L-methionine = [protein]-L-isoaspartate alpha-methyl ester + S-adenosyl-L-homocysteine. Catalyzes the methyl esterification of L-isoaspartyl residues in peptides and proteins that result from spontaneous decomposition of normal L-aspartyl and L-asparaginyl residues. It plays a role in the repair and/or degradation of damaged proteins. In Stenotrophomonas maltophilia (strain K279a), this protein is Protein-L-isoaspartate O-methyltransferase.